A 385-amino-acid polypeptide reads, in one-letter code: 5'-AMP-activated protein kinase catalytic subunit alpha-1 (385 aa).

Residues 1 to 229 (DGRVKIGHYI…IKDIREHEWF (229 aa)) enclose the Protein kinase domain. Threonine 14 carries the phosphothreonine modification. 15 to 22 (LGVGTFGK) contributes to the ATP binding site. The active-site Proton acceptor is aspartate 100. Threonine 133 carries the phosphothreonine; by LKB1 and CaMKK2 modification. Residues threonine 219 and threonine 276 each carry the phosphothreonine modification. The AIS stretch occupies residues 252-297 (EALKQDPLAVAYHLIIDNRDFYLATSPPDSFLDDHHLTRVPFLVAE). Position 277 is a phosphoserine (serine 277). Serine 281 bears the Phosphoserine; by ULK1 mark. A Phosphothreonine; by ULK1 modification is found at threonine 289. The residue at position 298 (threonine 298) is a Phosphothreonine. 2 positions are modified to phosphoserine: serine 353 and serine 383.

Belongs to the protein kinase superfamily. CAMK Ser/Thr protein kinase family. SNF1 subfamily. As to quaternary structure, AMPK is a heterotrimer of an alpha catalytic subunit (PRKAA1 or PRKAA2), a beta (PRKAB1 or PRKAB2) and a gamma non-catalytic subunits (PRKAG1, PRKAG2 or PRKAG3). Interacts with FNIP1 and FNIP2. Mg(2+) is required as a cofactor. Ubiquitinated. In terms of processing, phosphorylated at Thr-133 by STK11/LKB1 in complex with STE20-related adapter-alpha (STRADA) pseudo kinase and CAB39. Also phosphorylated at Thr-133 by CAMKK2; triggered by a rise in intracellular calcium ions, without detectable changes in the AMP/ATP ratio. CAMKK1 can also phosphorylate Thr-133, but at a much lower level. Dephosphorylated by protein phosphatase 2A and 2C (PP2A and PP2C). Phosphorylated by ULK1 and ULK2; leading to negatively regulate AMPK activity and suggesting the existence of a regulatory feedback loop between ULK1, ULK2 and AMPK. Dephosphorylated by PPM1A and PPM1B. Post-translationally, glycosylated; O-GlcNAcylated by OGT, promoting the AMP-activated protein kinase (AMPK) activity.

It is found in the cytoplasm. The protein localises to the nucleus. It carries out the reaction L-seryl-[protein] + ATP = O-phospho-L-seryl-[protein] + ADP + H(+). It catalyses the reaction L-threonyl-[protein] + ATP = O-phospho-L-threonyl-[protein] + ADP + H(+). The enzyme catalyses L-seryl-[acetyl-CoA carboxylase] + ATP = O-phospho-L-seryl-[acetyl-CoA carboxylase] + ADP + H(+). The catalysed reaction is L-seryl-[3-hydroxy-3-methylglutaryl-coenzyme A reductase] + ATP = O-phospho-L-seryl-[3-hydroxy-3-methylglutaryl-coenzyme A reductase] + ADP + H(+). It carries out the reaction L-seryl-[tau protein] + ATP = O-phospho-L-seryl-[tau protein] + ADP + H(+). It catalyses the reaction L-threonyl-[tau protein] + ATP = O-phospho-L-threonyl-[tau protein] + ADP + H(+). Activated by phosphorylation on Thr-133. Binding of AMP to non-catalytic gamma subunit (PRKAG1, PRKAG2 or PRKAG3) results in allosteric activation, inducing phosphorylation on Thr-133. AMP-binding to gamma subunit also sustains activity by preventing dephosphorylation of Thr-133. ADP also stimulates Thr-133 phosphorylation, without stimulating already phosphorylated AMPK. ATP promotes dephosphorylation of Thr-133, rendering the enzyme inactive. Under physiological conditions AMPK mainly exists in its inactive form in complex with ATP, which is much more abundant than AMP. Selectively inhibited by compound C (6-[4-(2-Piperidin-1-yl-ethoxy)-phenyl)]-3-pyridin-4-yl-pyyrazolo[1,5-a] pyrimidine. Activated by resveratrol, a natural polyphenol present in red wine, and S17834, a synthetic polyphenol. In terms of biological role, catalytic subunit of AMP-activated protein kinase (AMPK), an energy sensor protein kinase that plays a key role in regulating cellular energy metabolism. In response to reduction of intracellular ATP levels, AMPK activates energy-producing pathways and inhibits energy-consuming processes: inhibits protein, carbohydrate and lipid biosynthesis, as well as cell growth and proliferation. AMPK acts via direct phosphorylation of metabolic enzymes, and by longer-term effects via phosphorylation of transcription regulators. Regulates lipid synthesis by phosphorylating and inactivating lipid metabolic enzymes such as ACACA, ACACB, GYS1, HMGCR and LIPE; regulates fatty acid and cholesterol synthesis by phosphorylating acetyl-CoA carboxylase (ACACA and ACACB) and hormone-sensitive lipase (LIPE) enzymes, respectively. Promotes lipolysis of lipid droplets by mediating phosphorylation of isoform 1 of CHKA (CHKalpha2). Regulates insulin-signaling and glycolysis by phosphorylating IRS1, PFKFB2 and PFKFB3. AMPK stimulates glucose uptake in muscle by increasing the translocation of the glucose transporter SLC2A4/GLUT4 to the plasma membrane, possibly by mediating phosphorylation of TBC1D4/AS160. Regulates transcription and chromatin structure by phosphorylating transcription regulators involved in energy metabolism such as CRTC2/TORC2, FOXO3, histone H2B, HDAC5, MEF2C, MLXIPL/ChREBP, EP300, HNF4A, p53/TP53, SREBF1, SREBF2 and PPARGC1A. Acts as a key regulator of glucose homeostasis in liver by phosphorylating CRTC2/TORC2, leading to CRTC2/TORC2 sequestration in the cytoplasm. In response to stress, phosphorylates 'Ser-36' of histone H2B (H2BS36ph), leading to promote transcription. Acts as a key regulator of cell growth and proliferation by phosphorylating FNIP1, TSC2, RPTOR, WDR24 and ATG1/ULK1: in response to nutrient limitation, negatively regulates the mTORC1 complex by phosphorylating RPTOR component of the mTORC1 complex and by phosphorylating and activating TSC2. Also phosphorylates and inhibits GATOR2 subunit WDR24 in response to nutrient limitation, leading to suppress glucose-mediated mTORC1 activation. In response to energetic stress, phosphorylates FNIP1, inactivating the non-canonical mTORC1 signaling, thereby promoting nuclear translocation of TFEB and TFE3, and inducing transcription of lysosomal or autophagy genes. In response to nutrient limitation, promotes autophagy by phosphorylating and activating ATG1/ULK1. In that process also activates WDR45/WIPI4. Phosphorylates CASP6, thereby preventing its autoprocessing and subsequent activation. In response to nutrient limitation, phosphorylates transcription factor FOXO3 promoting FOXO3 mitochondrial import. Also acts as a regulator of cellular polarity by remodeling the actin cytoskeleton; probably by indirectly activating myosin. AMPK also acts as a regulator of circadian rhythm by mediating phosphorylation of CRY1, leading to destabilize it. May regulate the Wnt signaling pathway by phosphorylating CTNNB1, leading to stabilize it. Also has tau-protein kinase activity: in response to amyloid beta A4 protein (APP) exposure, activated by CAMKK2, leading to phosphorylation of MAPT/TAU; however the relevance of such data remains unclear in vivo. Also phosphorylates CFTR, EEF2K, KLC1, NOS3 and SLC12A1. Regulates hepatic lipogenesis. Activated via SIRT3, represses sterol regulatory element-binding protein (SREBP) transcriptional activities and ATP-consuming lipogenesis to restore cellular energy balance. Upon stress, regulates mitochondrial fragmentation through phosphorylation of MTFR1L. In Sus scrofa (Pig), this protein is 5'-AMP-activated protein kinase catalytic subunit alpha-1 (PRKAA1).